The sequence spans 225 residues: Thymidylate kinase (225 aa).

10 to 17 (GGEGAGKT) contributes to the ATP binding site.

Belongs to the thymidylate kinase family.

The enzyme catalyses dTMP + ATP = dTDP + ADP. Its function is as follows. Phosphorylation of dTMP to form dTDP in both de novo and salvage pathways of dTTP synthesis. This Oceanobacillus iheyensis (strain DSM 14371 / CIP 107618 / JCM 11309 / KCTC 3954 / HTE831) protein is Thymidylate kinase.